Reading from the N-terminus, the 797-residue chain is Protocadherin beta-9 (797 aa).

A signal peptide spans 1 to 26 (MKTRGFSFPRQRQVLFLFLFWGVSLA). Over 27–690 (GSGFGRYSVT…AQADSLTVYL (664 aa)) the chain is Extracellular. 5 Cadherin domains span residues 35–133 (VTEE…SPVF), 138–242 (MVLK…APQF), 247–347 (YETQ…PPEL), 352–451 (LSNS…APAF), and 456–561 (YTLF…SPFV). An N-linked (GlcNAc...) asparagine glycan is attached at asparagine 169. An N-linked (GlcNAc...) asparagine glycan is attached at asparagine 418. A glycan (N-linked (GlcNAc...) asparagine) is linked at asparagine 567. The Cadherin 6 domain maps to 568–671 (GSAPCTELVP…LVDGFSQPYL (104 aa)). Residues 691–711 (VVALASVSSLFLLSVLLFVAV) traverse the membrane as a helical segment. The Cytoplasmic portion of the chain corresponds to 712–797 (RLCRRSRAAS…TLHNSFGFNY (86 aa)).

Its subcellular location is the cell membrane. Functionally, potential calcium-dependent cell-adhesion protein. May be involved in the establishment and maintenance of specific neuronal connections in the brain. The sequence is that of Protocadherin beta-9 (PCDHB9) from Pan troglodytes (Chimpanzee).